The chain runs to 602 residues: Elongation factor 4 (602 aa).

Residues 7-189 (KRVRNFSIIA…AVVEKVPYPK (183 aa)) enclose the tr-type G domain. GTP is bound by residues 19–24 (DHGKST) and 136–139 (NKID).

The protein belongs to the TRAFAC class translation factor GTPase superfamily. Classic translation factor GTPase family. LepA subfamily.

Its subcellular location is the cell membrane. The catalysed reaction is GTP + H2O = GDP + phosphate + H(+). Required for accurate and efficient protein synthesis under certain stress conditions. May act as a fidelity factor of the translation reaction, by catalyzing a one-codon backward translocation of tRNAs on improperly translocated ribosomes. Back-translocation proceeds from a post-translocation (POST) complex to a pre-translocation (PRE) complex, thus giving elongation factor G a second chance to translocate the tRNAs correctly. Binds to ribosomes in a GTP-dependent manner. The protein is Elongation factor 4 of Clostridium tetani (strain Massachusetts / E88).